The sequence spans 296 residues: Lipoyl synthase (296 aa).

[4Fe-4S] cluster-binding residues include Cys-37, Cys-42, Cys-48, Cys-63, Cys-67, Cys-70, and Ser-276. A Radical SAM core domain is found at 49–265; that stretch reads WSKKHTTVMI…ERLAKTKGFL (217 aa).

The protein belongs to the radical SAM superfamily. Lipoyl synthase family. [4Fe-4S] cluster serves as cofactor.

The protein localises to the cytoplasm. It carries out the reaction [[Fe-S] cluster scaffold protein carrying a second [4Fe-4S](2+) cluster] + N(6)-octanoyl-L-lysyl-[protein] + 2 oxidized [2Fe-2S]-[ferredoxin] + 2 S-adenosyl-L-methionine + 4 H(+) = [[Fe-S] cluster scaffold protein] + N(6)-[(R)-dihydrolipoyl]-L-lysyl-[protein] + 4 Fe(3+) + 2 hydrogen sulfide + 2 5'-deoxyadenosine + 2 L-methionine + 2 reduced [2Fe-2S]-[ferredoxin]. Its pathway is protein modification; protein lipoylation via endogenous pathway; protein N(6)-(lipoyl)lysine from octanoyl-[acyl-carrier-protein]: step 2/2. In terms of biological role, catalyzes the radical-mediated insertion of two sulfur atoms into the C-6 and C-8 positions of the octanoyl moiety bound to the lipoyl domains of lipoate-dependent enzymes, thereby converting the octanoylated domains into lipoylated derivatives. The polypeptide is Lipoyl synthase (Rickettsia rickettsii (strain Iowa)).